A 470-amino-acid chain; its full sequence is ESX-4 secretion system ATPase EccB4 (470 aa).

The helical transmembrane segment at Leu-44–Leu-64 threads the bilayer.

The protein belongs to the EccB family. In terms of assembly, part of the ESX-4 / type VII secretion system (T7SS), which is composed of cytosolic and membrane components.

It is found in the cell membrane. In terms of biological role, an ATPase. In Mycobacterium tuberculosis (strain CDC 1551 / Oshkosh), this protein is ESX-4 secretion system ATPase EccB4 (eccB4).